A 251-amino-acid polypeptide reads, in one-letter code: uncharacterized protein (251 aa).

A signal peptide spans 1 to 18 (MKILIILSIILCSLFGRA).

Belongs to the MlaA family.

This is an uncharacterized protein from Rickettsia prowazekii (strain Madrid E).